The primary structure comprises 478 residues: Protein MAINTENANCE OF MERISTEMS (478 aa).

Residues 459-478 (ASTTNKRKRREEQQQTDWSE) form a disordered region. The short motif at 464-468 (KRKRR) is the Nuclear localization signal element.

As to expression, expressed in root meristem, root vasculature, shoot apical meristem (SAM), leaf vasculature and ovules.

The protein localises to the nucleus. Its function is as follows. Required for the organization of the root apical meristem (RAM) and the shoot apical meristem (SAM). Required to maintain genome stability and cell division activity in meristematic cells. This Arabidopsis thaliana (Mouse-ear cress) protein is Protein MAINTENANCE OF MERISTEMS.